A 240-amino-acid chain; its full sequence is RING finger protein 151 (240 aa).

The segment at 20-58 (CSVCHGVLKRPVRLPCSHIFCKKCILRWLARQKTCPCCR) adopts an RING-type zinc-finger fold. Residues 101-156 (GHQDSCPFELMVCPNEGCMLRVPRGALDEHRQNCQHGAYHRCSLGCGATLGPVERA) form a TRAF-type zinc finger.

In Bos taurus (Bovine), this protein is RING finger protein 151 (RNF151).